A 198-amino-acid polypeptide reads, in one-letter code: MQRRIGLTGGIASGKSSVGRLLEARGWPVLDADQYARDALAPNTAASQAVAHHFGAAVGTAADLDRKALGRIVFSDPDQRRWLEALIHPVVRERFQHELAELRDEPVVVLMIPLLFEAGLDVLCSEIWLVDCTPKQQLERMIQRDGLTKNEAQNRLQAQWPIARKRDRADCVIDNSGGVNDLLAAVSRCGLRADGTTW.

Residues 4–198 (RIGLTGGIAS…CGLRADGTTW (195 aa)) form the DPCK domain. 12 to 17 (ASGKSS) is an ATP binding site.

Belongs to the CoaE family.

It is found in the cytoplasm. It carries out the reaction 3'-dephospho-CoA + ATP = ADP + CoA + H(+). It participates in cofactor biosynthesis; coenzyme A biosynthesis; CoA from (R)-pantothenate: step 5/5. Functionally, catalyzes the phosphorylation of the 3'-hydroxyl group of dephosphocoenzyme A to form coenzyme A. The polypeptide is Dephospho-CoA kinase (Parasynechococcus marenigrum (strain WH8102)).